A 163-amino-acid polypeptide reads, in one-letter code: Glycine cleavage system H-like protein gcvH5, mitochondrial (163 aa).

The N-terminal 23 residues, 1 to 23 (MFLFKTTNNLRKSLSNKFFCTRY), are a transit peptide targeting the mitochondrion. The 87-residue stretch at 50-136 (IGTLGLTENG…MSKGWLCKIK (87 aa)) folds into the Lipoyl-binding domain.

It belongs to the GcvH family.

The protein resides in the mitochondrion. The polypeptide is Glycine cleavage system H-like protein gcvH5, mitochondrial (gcvH5) (Dictyostelium discoideum (Social amoeba)).